A 260-amino-acid polypeptide reads, in one-letter code: Thiazole synthase (260 aa).

The active-site Schiff-base intermediate with DXP is Lys-100. Residues Gly-161, Ala-187–Gly-188, and Asn-209–Thr-210 contribute to the 1-deoxy-D-xylulose 5-phosphate site.

The protein belongs to the ThiG family. Homotetramer. Forms heterodimers with either ThiH or ThiS.

Its subcellular location is the cytoplasm. It carries out the reaction [ThiS sulfur-carrier protein]-C-terminal-Gly-aminoethanethioate + 2-iminoacetate + 1-deoxy-D-xylulose 5-phosphate = [ThiS sulfur-carrier protein]-C-terminal Gly-Gly + 2-[(2R,5Z)-2-carboxy-4-methylthiazol-5(2H)-ylidene]ethyl phosphate + 2 H2O + H(+). It functions in the pathway cofactor biosynthesis; thiamine diphosphate biosynthesis. In terms of biological role, catalyzes the rearrangement of 1-deoxy-D-xylulose 5-phosphate (DXP) to produce the thiazole phosphate moiety of thiamine. Sulfur is provided by the thiocarboxylate moiety of the carrier protein ThiS. In vitro, sulfur can be provided by H(2)S. The sequence is that of Thiazole synthase from Sorangium cellulosum (strain So ce56) (Polyangium cellulosum (strain So ce56)).